The following is a 204-amino-acid chain: Recombination protein RecR (204 aa).

Residues 61–76 (CACCNTFSETQVCSTC) form a C4-type zinc finger. In terms of domain architecture, Toprim spans 84 to 183 (SLLCIVETPA…KVTRIARGIP (100 aa)).

Belongs to the RecR family.

In terms of biological role, may play a role in DNA repair. It seems to be involved in an RecBC-independent recombinational process of DNA repair. It may act with RecF and RecO. This is Recombination protein RecR from Polynucleobacter necessarius subsp. necessarius (strain STIR1).